Consider the following 257-residue polypeptide: Small ribosomal subunit protein uS15m (257 aa).

The transit peptide at 1-57 (MLRVAWRTLSLIRTRAVTQVLVPGLPGGGSAKFPFNQWGLQPRSLLLQAARGYVVRK) directs the protein to the mitochondrion. The tract at residues 225-257 (RALKAAAAAQKQAKRRNPDSPAKAIPKTLKDSQ) is disordered.

The protein belongs to the universal ribosomal protein uS15 family. In terms of assembly, component of the mitochondrial small ribosomal subunit (mt-SSU). Mature mammalian 55S mitochondrial ribosomes consist of a small (28S) and a large (39S) subunit. The 28S small subunit contains a 12S ribosomal RNA (12S mt-rRNA) and 30 different proteins. The 39S large subunit contains a 16S rRNA (16S mt-rRNA), a copy of mitochondrial valine transfer RNA (mt-tRNA(Val)), which plays an integral structural role, and 52 different proteins. Interacts with METTL17.

It localises to the mitochondrion matrix. This Homo sapiens (Human) protein is Small ribosomal subunit protein uS15m (MRPS15).